A 911-amino-acid polypeptide reads, in one-letter code: General transcription factor 3C polypeptide 2 (911 aa).

Disordered stretches follow at residues 34-187 (LDVK…RRRA) and 205-297 (ALPA…MAPN). Polar residues predominate over residues 35-46 (DVKTSSEMTSAE). Phosphoserine is present on Ser63. The segment covering 64–81 (PDQRRLPPEQESLSRLEQ) has biased composition (basic and acidic residues). The segment covering 92-112 (SKPRASKPGRKRGGRTRKGPK) has biased composition (basic residues). The span at 114 to 123 (PQQPNPPSAP) shows a compositional bias: pro residues. 5 positions are modified to phosphoserine: Ser132, Ser165, Ser167, Ser220, and Ser260. Positions 253–262 (EAEDVEESEG) are enriched in acidic residues. A compositionally biased stretch (low complexity) spans 263–275 (PSESSSEPEPAVP). WD repeat units lie at residues 465 to 521 (CDNG…ALLA) and 552 to 593 (SECG…PLQR). Ser597 is modified (phosphoserine). The stretch at 611–651 (AHDQAVRTLQWCKANSHFLASAGSDRKIKFWDLRRPYEPIN) is one WD 3 repeat. The tract at residues 765 to 785 (SPEGPDHSSASSGVPNPPKAR) is disordered. A WD 4 repeat occupies 832-874 (LQLEAIHKVRFSPNLDSYGWLVSGGQSGLVRIHFVRGLASPLG). 3 positions are modified to phosphoserine: Ser871, Ser892, and Ser893. Residues 889-911 (FQPSSPTRRPGFSPTSHRLLPTP) are disordered. Residue Thr895 is modified to Phosphothreonine. Residue Ser901 is modified to Phosphoserine.

Part of the TFIIIC subcomplex TFIIIC2, consisting of six subunits, GTF3C1, GTF3C2, GTF3C3, GTF3C4, GTF3C5 and GTF3C6.

It localises to the nucleus. Functionally, required for RNA polymerase III-mediated transcription. Component of TFIIIC that initiates transcription complex assembly on tRNA and is required for transcription of 5S rRNA and other stable nuclear and cytoplasmic RNAs. May play a direct role in stabilizing interactions of TFIIIC2 with TFIIIC1. In Pongo abelii (Sumatran orangutan), this protein is General transcription factor 3C polypeptide 2 (GTF3C2).